The primary structure comprises 356 residues: Cell division control protein 10 (356 aa).

Residues 36-286 (KGFELNVLVV…NNYRKKIFEI (251 aa)) form the Septin-type G domain. The G1 motif stretch occupies residues 46–53 (GRRGLGTS). Residues 46-53 (GRRGLGTS) and Thr-70 each bind GTP. The G3 motif stretch occupies residues 93–96 (TYHE). Positions 163–166 (PKAD) are G4 motif. GTP contacts are provided by residues 164 to 172 (KADMYTPDE) and Arg-235.

This sequence belongs to the TRAFAC class TrmE-Era-EngA-EngB-Septin-like GTPase superfamily. Septin GTPase family. As to quaternary structure, component of the septin complex.

In terms of biological role, septins are GTPases involved in cytokinesis. The septins localize to the site of cleavage and act as a structural scaffold that recruits different components involved in diverse processes at specific stages during the cell cycle. Septins are also involved in cell morphogenesis, chitin deposition, cell cycle regulation, cell compartmentalization and spore wall formation. The chain is Cell division control protein 10 (CDC10) from Encephalitozoon cuniculi (strain GB-M1) (Microsporidian parasite).